The sequence spans 410 residues: Peptidase T-like protein YPO1009/y3403/YP_3421 (410 aa).

H82 provides a ligand contact to Zn(2+). D84 is an active-site residue. Residue D144 participates in Zn(2+) binding. The active-site Proton acceptor is the E176. Residues E177, D200, and H382 each contribute to the Zn(2+) site.

The protein belongs to the peptidase M20B family. It depends on Zn(2+) as a cofactor.

This is Peptidase T-like protein YPO1009/y3403/YP_3421 from Yersinia pestis.